The chain runs to 518 residues: Arrestin-related trafficking adapter 10 (518 aa).

A Glycyl lysine isopeptide (Lys-Gly) (interchain with G-Cter in ubiquitin) cross-link involves residue Lys-118.

This sequence belongs to the ART10 family. In terms of assembly, interacts with RSP5. Ubiquitinated by RSP5.

The protein localises to the cytoplasm. May regulate endocytosis by recruiting RSP5 ubiquitin ligase activity to specific plasma membrane proteins in response to extracellular stimuli. This chain is Arrestin-related trafficking adapter 10 (ART10), found in Saccharomyces cerevisiae (strain RM11-1a) (Baker's yeast).